The primary structure comprises 56 residues: Ovomucoid (56 aa).

One can recognise a Kazal-like domain in the interval 6–56; it reads VDCSEYPKPACTLEYRPLCGSDNKTYANKCNFCNAVVESNGTLTLSHFGKC. 3 disulfide bridges follow: C8/C38, C16/C35, and C24/C56. N-linked (GlcNAc...) asparagine glycosylation occurs at N45.

It localises to the secreted. This Callipepla californica (California quail) protein is Ovomucoid.